Consider the following 549-residue polypeptide: Dihydroxy-acid dehydratase (549 aa).

Aspartate 78 lines the Mg(2+) pocket. Position 119 (cysteine 119) interacts with [2Fe-2S] cluster. Positions 120 and 121 each coordinate Mg(2+). At lysine 121 the chain carries N6-carboxylysine. Position 192 (cysteine 192) interacts with [2Fe-2S] cluster. Glutamate 439 is a binding site for Mg(2+). The active-site Proton acceptor is serine 465.

The protein belongs to the IlvD/Edd family. In terms of assembly, homodimer. Requires [2Fe-2S] cluster as cofactor. Mg(2+) is required as a cofactor.

It carries out the reaction (2R)-2,3-dihydroxy-3-methylbutanoate = 3-methyl-2-oxobutanoate + H2O. The enzyme catalyses (2R,3R)-2,3-dihydroxy-3-methylpentanoate = (S)-3-methyl-2-oxopentanoate + H2O. It functions in the pathway amino-acid biosynthesis; L-isoleucine biosynthesis; L-isoleucine from 2-oxobutanoate: step 3/4. Its pathway is amino-acid biosynthesis; L-valine biosynthesis; L-valine from pyruvate: step 3/4. Functionally, functions in the biosynthesis of branched-chain amino acids. Catalyzes the dehydration of (2R,3R)-2,3-dihydroxy-3-methylpentanoate (2,3-dihydroxy-3-methylvalerate) into 2-oxo-3-methylpentanoate (2-oxo-3-methylvalerate) and of (2R)-2,3-dihydroxy-3-methylbutanoate (2,3-dihydroxyisovalerate) into 2-oxo-3-methylbutanoate (2-oxoisovalerate), the penultimate precursor to L-isoleucine and L-valine, respectively. This Endomicrobium trichonymphae protein is Dihydroxy-acid dehydratase.